The primary structure comprises 389 residues: Acetate kinase (389 aa).

Asparagine 7 is a Mg(2+) binding site. Lysine 14 provides a ligand contact to ATP. Arginine 88 serves as a coordination point for substrate. Catalysis depends on aspartate 145, which acts as the Proton donor/acceptor. Residues 205-209 (HLGNG), 279-281 (DLR), and 324-328 (GIGEN) each bind ATP. Glutamate 375 lines the Mg(2+) pocket.

The protein belongs to the acetokinase family. Homodimer. It depends on Mg(2+) as a cofactor. Requires Mn(2+) as cofactor.

The protein localises to the cytoplasm. It catalyses the reaction acetate + ATP = acetyl phosphate + ADP. The protein operates within metabolic intermediate biosynthesis; acetyl-CoA biosynthesis; acetyl-CoA from acetate: step 1/2. Functionally, catalyzes the formation of acetyl phosphate from acetate and ATP. Can also catalyze the reverse reaction. The chain is Acetate kinase from Sulfurimonas denitrificans (strain ATCC 33889 / DSM 1251) (Thiomicrospira denitrificans (strain ATCC 33889 / DSM 1251)).